The chain runs to 718 residues: F-box/LRR-repeat protein 18 (718 aa).

In terms of domain architecture, F-box spans 25–72 (GVHLLGFSDEILLHILSHVPSTDLILNVRRTCRKLAALCLDKSLIHTV). 12 LRR repeats span residues 77–103 (DYQASEDKVRQLVKEIGREIQQLSMAG), 104–128 (CYWLPGSTVEHVARCRSLVKVNLSG), 129–153 (CHLTSLRLSKMLSALQHLRSLAIDV), 177–201 (KQTLFTPSYGVVPCCTSLEKLLLYF), 324–352 (CTLSGGHLIQQVINGGKDLRSLASLNLSG), 367–392 (EDDIDSSILETLVASCCNLRHLNLSA), 393–422 (AHHHSSEGLGRHLCQLLARLRHLRSLSLPV), 468–492 (CPQPSSVFWSLLKNLPFLEHLELIG), 516–540 (AQSVGDSEVAAIGQLAFLRHLTLAQ), 542–567 (PSVLTGSGLVNIGLQCQQLRSLSLAN), 572–597 (GKVVYMPALSDMLKHCKRLRDLRLEQ), and 599–623 (YFSANAQFFQALSQCPSLQRLCLVS).

Directly interacts with SKP1 and CUL1.

Substrate-recognition component of the SCF (SKP1-CUL1-F-box protein)-type E3 ubiquitin ligase complex. The chain is F-box/LRR-repeat protein 18 (FBXL18) from Homo sapiens (Human).